We begin with the raw amino-acid sequence, 1001 residues long: Transcription-repair-coupling factor (1001 aa).

In terms of domain architecture, Helicase ATP-binding spans 499–658; sequence DLSSHRVMDR…LSQIKGISSL (160 aa). 512–519 contributes to the ATP binding site; it reads GDVGFGKT. The DEEH box motif lies at 611–614; it reads DEEH. The Helicase C-terminal domain maps to 679 to 835; that stretch reads LLKEIIYREL…SIAYHDLEIR (157 aa).

In the N-terminal section; belongs to the UvrB family. This sequence in the C-terminal section; belongs to the helicase family. RecG subfamily.

It is found in the cytoplasm. Functionally, couples transcription and DNA repair by recognizing RNA polymerase (RNAP) stalled at DNA lesions. Mediates ATP-dependent release of RNAP and its truncated transcript from the DNA, and recruitment of nucleotide excision repair machinery to the damaged site. The chain is Transcription-repair-coupling factor from Helicobacter pylori (strain J99 / ATCC 700824) (Campylobacter pylori J99).